The primary structure comprises 226 residues: Probable chemoreceptor glutamine deamidase CheD (226 aa).

The protein belongs to the CheD family.

The catalysed reaction is L-glutaminyl-[protein] + H2O = L-glutamyl-[protein] + NH4(+). Functionally, probably deamidates glutamine residues to glutamate on methyl-accepting chemotaxis receptors (MCPs), playing an important role in chemotaxis. In Bordetella avium (strain 197N), this protein is Probable chemoreceptor glutamine deamidase CheD.